We begin with the raw amino-acid sequence, 111 residues long: Ribonuclease P protein component (111 aa).

This sequence belongs to the RnpA family. As to quaternary structure, consists of a catalytic RNA component (M1 or rnpB) and a protein subunit.

It catalyses the reaction Endonucleolytic cleavage of RNA, removing 5'-extranucleotides from tRNA precursor.. Functionally, RNaseP catalyzes the removal of the 5'-leader sequence from pre-tRNA to produce the mature 5'-terminus. It can also cleave other RNA substrates such as 4.5S RNA. The protein component plays an auxiliary but essential role in vivo by binding to the 5'-leader sequence and broadening the substrate specificity of the ribozyme. The sequence is that of Ribonuclease P protein component from Mycoplasmopsis pulmonis (strain UAB CTIP) (Mycoplasma pulmonis).